The chain runs to 256 residues: Adenylate kinase (256 aa).

49–54 (GAGKGT) serves as a coordination point for ATP. The interval 69–98 (ATGDMLREQVQQKTPLGIEAKKIMDAGGLV) is NMP. AMP is bound by residues Thr-70, Arg-75, 96 to 98 (GLV), 125 to 128 (GFPR), and Gln-132. The tract at residues 166–203 (GRLVHPASGRSYHKEFNPPKKRNVDDVTGEPLIQRSDD) is LID. Residues Arg-167 and 176–177 (SY) contribute to the ATP site. AMP-binding residues include Arg-200 and Arg-211. Residue Gln-239 participates in ATP binding.

It belongs to the adenylate kinase family. AK2 subfamily. Monomer.

The protein localises to the cytoplasm. The protein resides in the cytosol. Its subcellular location is the mitochondrion intermembrane space. It catalyses the reaction AMP + ATP = 2 ADP. Its function is as follows. Catalyzes the reversible transfer of the terminal phosphate group between ATP and AMP. Plays an important role in cellular energy homeostasis and in adenine nucleotide metabolism. Adenylate kinase activity is critical for regulation of the phosphate utilization and the AMP de novo biosynthesis pathways. This is Adenylate kinase from Laccaria bicolor (strain S238N-H82 / ATCC MYA-4686) (Bicoloured deceiver).